Reading from the N-terminus, the 274-residue chain is MTNYTGYLQLSTEKKRGKTIAQDMYFYGAFKLMNPFYLNNDEQACFYIMNPGGGYVDGDTYRMDIHLAKEAQLLLTTQSASKIYKTPKNPVVQEINITLKEGSLLEYLPDPIIGYKNSRYKQKTIVHMEKGTSLIATDIITSGWDPKGNLFSYHMLDLNTKVYLEDNLILLDHIRLTPGSQSLSSIGQFEEYSHLGTMIVVSEYTDESLISMLYDVMETQNLKCRYGLSMLSKPGFMLRVLASSTQEVMRAFDICHKLIRMKWYKRSPVFLGKY.

It belongs to the UreD family. As to quaternary structure, ureD, UreF and UreG form a complex that acts as a GTP-hydrolysis-dependent molecular chaperone, activating the urease apoprotein by helping to assemble the nickel containing metallocenter of UreC. The UreE protein probably delivers the nickel.

It is found in the cytoplasm. Required for maturation of urease via the functional incorporation of the urease nickel metallocenter. This chain is Urease accessory protein UreD, found in Lachnoclostridium phytofermentans (strain ATCC 700394 / DSM 18823 / ISDg) (Clostridium phytofermentans).